The primary structure comprises 178 residues: uncharacterized protein (178 aa).

An N-terminal signal peptide occupies residues 1–19 (MINRKILLTSLLLIFTVLS). Catalysis depends on residues Arg52, Glu60, and Arg94.

This sequence belongs to the thermonuclease family.

This is an uncharacterized protein from Haemophilus influenzae (strain ATCC 51907 / DSM 11121 / KW20 / Rd).